The sequence spans 95 residues: MRLFILILSAILLLFQYDLWFGKNGYLDYKETAEEIAMHKAENTKLSQRNQVVAAEIRDLKDGVEAIQERARLQYELVKPNETFYRIAKENKDNR.

The Cytoplasmic portion of the chain corresponds to 1 to 3 (MRL). The helical transmembrane segment at 4–21 (FILILSAILLLFQYDLWF) threads the bilayer. At 22 to 95 (GKNGYLDYKE…RIAKENKDNR (74 aa)) the chain is on the periplasmic side. Residues 28 to 62 (DYKETAEEIAMHKAENTKLSQRNQVVAAEIRDLKD) are a coiled coil.

Belongs to the FtsB family. In terms of assembly, part of a complex composed of FtsB, FtsL and FtsQ.

The protein localises to the cell inner membrane. Essential cell division protein. May link together the upstream cell division proteins, which are predominantly cytoplasmic, with the downstream cell division proteins, which are predominantly periplasmic. The chain is Cell division protein FtsB from Mannheimia succiniciproducens (strain KCTC 0769BP / MBEL55E).